Consider the following 278-residue polypeptide: Putative pyruvate, phosphate dikinase regulatory protein (278 aa).

ADP is bound at residue 156-163; it reads GVSRTSKT.

Belongs to the pyruvate, phosphate/water dikinase regulatory protein family. PDRP subfamily.

It catalyses the reaction N(tele)-phospho-L-histidyl/L-threonyl-[pyruvate, phosphate dikinase] + ADP = N(tele)-phospho-L-histidyl/O-phospho-L-threonyl-[pyruvate, phosphate dikinase] + AMP + H(+). The enzyme catalyses N(tele)-phospho-L-histidyl/O-phospho-L-threonyl-[pyruvate, phosphate dikinase] + phosphate + H(+) = N(tele)-phospho-L-histidyl/L-threonyl-[pyruvate, phosphate dikinase] + diphosphate. In terms of biological role, bifunctional serine/threonine kinase and phosphorylase involved in the regulation of the pyruvate, phosphate dikinase (PPDK) by catalyzing its phosphorylation/dephosphorylation. The polypeptide is Putative pyruvate, phosphate dikinase regulatory protein (Lactobacillus acidophilus (strain ATCC 700396 / NCK56 / N2 / NCFM)).